A 29-amino-acid chain; its full sequence is ATP synthase subunit 9, mitochondrial (29 aa).

The protein belongs to the ATPase C chain family. F-type ATPases have 2 components, CF(1) - the catalytic core - and CF(0) - the membrane proton channel. CF(1) has five subunits: alpha(3), beta(3), gamma(1), delta(1), epsilon(1). CF(0) has three main subunits: a, b and c.

The protein resides in the mitochondrion membrane. Functionally, mitochondrial membrane ATP synthase (F(1)F(0) ATP synthase or Complex V) produces ATP from ADP in the presence of a proton gradient across the membrane which is generated by electron transport complexes of the respiratory chain. F-type ATPases consist of two structural domains, F(1) - containing the extramembraneous catalytic core and F(0) - containing the membrane proton channel, linked together by a central stalk and a peripheral stalk. During catalysis, ATP synthesis in the catalytic domain of F(1) is coupled via a rotary mechanism of the central stalk subunits to proton translocation. Part of the complex F(0) domain. A homomeric c-ring of probably 10 subunits is part of the complex rotary element. This Wickerhamomyces pijperi (Yeast) protein is ATP synthase subunit 9, mitochondrial (ATP9).